Reading from the N-terminus, the 76-residue chain is Small ribosomal subunit protein bS16 (76 aa).

Belongs to the bacterial ribosomal protein bS16 family.

This is Small ribosomal subunit protein bS16 from Helicobacter acinonychis (strain Sheeba).